A 279-amino-acid chain; its full sequence is GTP cyclohydrolase MptA (279 aa).

The protein belongs to the GTP cyclohydrolase IV family. As to quaternary structure, homodimer. Requires Fe(2+) as cofactor.

The enzyme catalyses GTP + H2O = 7,8-dihydroneopterin 2',3'-cyclic phosphate + formate + diphosphate + H(+). Its pathway is cofactor biosynthesis; 5,6,7,8-tetrahydromethanopterin biosynthesis. Functionally, converts GTP to 7,8-dihydro-D-neopterin 2',3'-cyclic phosphate, the first intermediate in the biosynthesis of coenzyme methanopterin. The protein is GTP cyclohydrolase MptA of Korarchaeum cryptofilum (strain OPF8).